The chain runs to 539 residues: Probable methionine--tRNA ligase, mitochondrial (539 aa).

Residues 28 to 38 (FYVNAAPHLGH) carry the 'HIGH' region motif. A 'KMSKS' region motif is present at residues 326–330 (KMSKS). Lys-329 serves as a coordination point for ATP.

The protein belongs to the class-I aminoacyl-tRNA synthetase family.

The protein resides in the mitochondrion matrix. It catalyses the reaction tRNA(Met) + L-methionine + ATP = L-methionyl-tRNA(Met) + AMP + diphosphate. The chain is Probable methionine--tRNA ligase, mitochondrial from Schizosaccharomyces pombe (strain 972 / ATCC 24843) (Fission yeast).